The chain runs to 358 residues: tRNA-specific 2-thiouridylase MnmA (358 aa).

ATP-binding positions include glycine 8 to serine 15 and methionine 34. Positions asparagine 94–aspartate 96 are interaction with target base in tRNA. Catalysis depends on cysteine 99, which acts as the Nucleophile. A disulfide bond links cysteine 99 and cysteine 196. An ATP-binding site is contributed by glycine 123. Positions lysine 146–glutamine 148 are interaction with tRNA. Cysteine 196 (cysteine persulfide intermediate) is an active-site residue. The tract at residues arginine 308–tyrosine 309 is interaction with tRNA.

It belongs to the MnmA/TRMU family.

Its subcellular location is the cytoplasm. The catalysed reaction is S-sulfanyl-L-cysteinyl-[protein] + uridine(34) in tRNA + AH2 + ATP = 2-thiouridine(34) in tRNA + L-cysteinyl-[protein] + A + AMP + diphosphate + H(+). Catalyzes the 2-thiolation of uridine at the wobble position (U34) of tRNA, leading to the formation of s(2)U34. The sequence is that of tRNA-specific 2-thiouridylase MnmA from Thiobacillus denitrificans (strain ATCC 25259 / T1).